The following is a 200-amino-acid chain: Lipopolysaccharide core heptose(II)-phosphate phosphatase (200 aa).

Positions 1–25 are cleaved as a signal peptide; it reads MLAFCRSSLKSKKYFIILLALAAIA.

Belongs to the phosphoglycerate mutase family. Ais subfamily.

It localises to the periplasm. Its pathway is bacterial outer membrane biogenesis; lipopolysaccharide metabolism. Functionally, catalyzes the dephosphorylation of heptose(II) of the outer membrane lipopolysaccharide core. The chain is Lipopolysaccharide core heptose(II)-phosphate phosphatase from Escherichia coli O17:K52:H18 (strain UMN026 / ExPEC).